Here is a 463-residue protein sequence, read N- to C-terminus: Quinolone resistance protein NorB (463 aa).

14 consecutive transmembrane segments (helical) span residues 17–37, 53–73, 86–106, 107–127, 142–162, 165–185, 201–221, 230–250, 273–293, 299–319, 334–354, 357–377, 403–423, and 435–455; these read IGIV…VNVV, IAVS…GGLA, IILN…LLLI, IGRL…LSII, YWSI…GAVA, LGWR…LFLI, FDIK…ILIT, SLLF…FIVL, TASN…NTFV, YSSL…LIMI, PMLI…LTFL, ILYV…LGIY, MASA…YAIV, and IALW…LLLV.

This sequence belongs to the major facilitator superfamily. TCR/Tet family.

It localises to the cell membrane. Its function is as follows. Multidrug efflux pump that acts independently of NorA and is one of the factors that confers resistance against diverse quinolones and chemical compounds. This Staphylococcus aureus (strain MRSA252) protein is Quinolone resistance protein NorB (norB).